A 497-amino-acid chain; its full sequence is Guanosine-5'-triphosphate,3'-diphosphate pyrophosphatase (497 aa).

Belongs to the GppA/Ppx family. GppA subfamily.

The enzyme catalyses guanosine 3'-diphosphate 5'-triphosphate + H2O = guanosine 3',5'-bis(diphosphate) + phosphate + H(+). It participates in purine metabolism; ppGpp biosynthesis; ppGpp from GTP: step 2/2. Catalyzes the conversion of pppGpp to ppGpp. Guanosine pentaphosphate (pppGpp) is a cytoplasmic signaling molecule which together with ppGpp controls the 'stringent response', an adaptive process that allows bacteria to respond to amino acid starvation, resulting in the coordinated regulation of numerous cellular activities. The polypeptide is Guanosine-5'-triphosphate,3'-diphosphate pyrophosphatase (Vibrio parahaemolyticus serotype O3:K6 (strain RIMD 2210633)).